We begin with the raw amino-acid sequence, 71 residues long: Conotoxin Bu23 (71 aa).

An N-terminal signal peptide occupies residues 1–21; that stretch reads MGMRMMVTVFLLGVLATTVVS. Residues 22 to 37 constitute a propeptide that is removed on maturation; that stretch reads LRSNRASDGRRGIVNK. N70 carries the asparagine amide modification.

The protein belongs to the conotoxin A superfamily. In terms of processing, contains 3 disulfide bonds. They are not indicated here, since framework IV presents two different connectivities (I-V, II-III, IV-VI and I-III, II-V, IV-VI). As to expression, expressed by the venom duct.

It localises to the secreted. The polypeptide is Conotoxin Bu23 (Conus bullatus (Bubble cone)).